The chain runs to 169 residues: Tumor suppressor ARF (169 aa).

The interaction with CDK5RAP3 and MDM2 stretch occupies residues 1–63; sequence MGRRFLVTVR…RRGPHRNPGP (63 aa). Positions 54–73 are disordered; it reads RRGPHRNPGPGDDDGQRSRS.

As to quaternary structure, does not interact with cyclins, CDK1, CDK2, CDK4, CDK5 or CDK6. Interacts with COMMD1. Binds to BCL6, E2F1, HUWE1, MDM2, MYC, NPM1/B23, TOP1/TOPOI and UBE2I/UBC9. Interacts with TBRG1. Interacts with CDKN2AIP and E4F1. Interacts with CDK5RAP3 and MDM2; form a ternary complex involved in regulation of p53/TP53. Interacts with NOP53; the interaction is direct and promotes ARF nucleoplasmic relocalization and ubiquitin-mediated proteasomal degradation. Interacts with TTF1 (via the N-terminal region (NRD) and a C-terminal region); the interaction is direct and inhibits the nucleolar localization of TTF1. In terms of assembly, interacts with C1QBP. Ubiquitinated in normal cells by TRIP12 via the ubiquitin fusion degradation (UFD) pathway, a process that mediates ubiquitination at the N-terminus, regardless of the absence of lysine residues. Ubiquitination leads to its proteasomal degradation. In cancer cells, however, TRIP12 is located in a different cell compartment, preventing ubiquitination and degradation.

It is found in the nucleus. It localises to the nucleolus. The protein localises to the nucleoplasm. Its subcellular location is the mitochondrion. Functionally, capable of inducing cell cycle arrest in G1 and G2 phases. Acts as a tumor suppressor. Binds to MDM2 and blocks its nucleocytoplasmic shuttling by sequestering it in the nucleolus. This inhibits the oncogenic action of MDM2 by blocking MDM2-induced degradation of p53 and enhancing p53-dependent transactivation and apoptosis. Also induces G2 arrest and apoptosis in a p53-independent manner by preventing the activation of cyclin B1/CDC2 complexes. Binds to BCL6 and down-regulates BCL6-induced transcriptional repression. Binds to E2F1 and MYC and blocks their transcriptional activator activity but has no effect on MYC transcriptional repression. Binds to TOP1/TOPOI and stimulates its activity. This complex binds to rRNA gene promoters and may play a role in rRNA transcription and/or maturation. Interacts with NPM1/B23 and promotes its polyubiquitination and degradation, thus inhibiting rRNA processing. Plays a role in inhibiting ribosome biogenesis, perhaps by binding to the nucleolar localization sequence of transcription termination factor TTF1, and thereby preventing nucleolar localization of TTF1. Interacts with COMMD1 and promotes its 'Lys63'-linked polyubiquitination. Interacts with UBE2I/UBC9 and enhances sumoylation of a number of its binding partners including MDM2 and E2F1. Binds to HUWE1 and represses its ubiquitin ligase activity. May play a role in controlling cell proliferation and apoptosis during mammary gland development. Its function is as follows. May be involved in regulation of autophagy and caspase-independent cell death; the short-lived mitochondrial isoform is stabilized by C1QBP. The polypeptide is Tumor suppressor ARF (Mus musculus (Mouse)).